The primary structure comprises 644 residues: Coiled-coil domain-containing protein 22 homolog (644 aa).

Residues 316–341 are disordered; that stretch reads DEQKAAAMAGLSESGPPKMDTEEELQ. 3 coiled-coil regions span residues 333 to 383, 409 to 486, and 592 to 644; these read KMDT…NEQV, DAEN…GKDD, and GVIM…LKSS.

This sequence belongs to the CCDC22 family.

This Nematostella vectensis (Starlet sea anemone) protein is Coiled-coil domain-containing protein 22 homolog.